Reading from the N-terminus, the 254-residue chain is MGRGRVEMKRIENKINRQVTFSKRRAGLLKKAHEISILCDAEVSLIVFSHKGKLFEYSSESCMEKVLERYERYSYAEKQLKAPDSHVNAQTNWSMEYSRLKAKIELLERNQRHYLGEDLESISIKELQNLEQQLDTSLKHIRSRKNQLMHESLNHLQRKEKEILEENSMLTKQIKERESILRTHQNQSEQQNRSHHVAPQPQPQLNPYMISHQASPFLSMGGMYQGEDPTAVRRNRLDLTLEPIYNCNLGYFAA.

Residues 1 to 61 (MGRGRVEMKR…GKLFEYSSES (61 aa)) form the MADS-box domain. The 91-residue stretch at 90-180 (QTNWSMEYSR…TKQIKERESI (91 aa)) folds into the K-box domain. The span at 182–191 (RTHQNQSEQQ) shows a compositional bias: polar residues. The disordered stretch occupies residues 182–205 (RTHQNQSEQQNRSHHVAPQPQPQL).

In terms of assembly, homodimer capable of binding to CArG-box sequences.

The protein resides in the nucleus. Functionally, probable transcription factor that promotes early floral meristem identity in synergy with APETALA1, FRUITFULL and LEAFY. Is required subsequently for the transition of an inflorescence meristem into a floral meristem. Seems to be partially redundant to the function of APETALA1. The polypeptide is Transcription factor CAULIFLOWER (CAL) (Brassica rapa subsp. pekinensis (Chinese cabbage)).